Consider the following 503-residue polypeptide: Probable cytosol aminopeptidase (503 aa).

2 residues coordinate Mn(2+): Lys-268 and Asp-273. The active site involves Lys-280. Mn(2+)-binding residues include Asp-291, Asp-350, and Glu-352. Arg-354 is an active-site residue.

This sequence belongs to the peptidase M17 family. It depends on Mn(2+) as a cofactor.

The protein localises to the cytoplasm. It catalyses the reaction Release of an N-terminal amino acid, Xaa-|-Yaa-, in which Xaa is preferably Leu, but may be other amino acids including Pro although not Arg or Lys, and Yaa may be Pro. Amino acid amides and methyl esters are also readily hydrolyzed, but rates on arylamides are exceedingly low.. It carries out the reaction Release of an N-terminal amino acid, preferentially leucine, but not glutamic or aspartic acids.. Its function is as follows. Presumably involved in the processing and regular turnover of intracellular proteins. Catalyzes the removal of unsubstituted N-terminal amino acids from various peptides. This Corynebacterium efficiens (strain DSM 44549 / YS-314 / AJ 12310 / JCM 11189 / NBRC 100395) protein is Probable cytosol aminopeptidase.